The chain runs to 432 residues: Putative D-alanyl-D-alanine carboxypeptidase (432 aa).

A helical; Signal-anchor membrane pass occupies residues 7–25 (ATVLLTFSLSAFAVEYPVL).

Belongs to the peptidase S12 family. YfeW subfamily.

The protein localises to the cell inner membrane. It carries out the reaction Preferential cleavage: (Ac)2-L-Lys-D-Ala-|-D-Ala. Also transpeptidation of peptidyl-alanyl moieties that are N-acyl substituents of D-alanine.. The protein is Putative D-alanyl-D-alanine carboxypeptidase of Salmonella paratyphi A (strain ATCC 9150 / SARB42).